We begin with the raw amino-acid sequence, 174 residues long: Gamma-crystallin C (174 aa).

2 consecutive Beta/gamma crystallin 'Greek key' domains span residues 2-40 (GKITFYEDRGFQGRCYECSSDCPNLQTYFSRCNSIRVDS) and 41-83 (GCWM…RLIP). Position 23 is an S-methylcysteine (Cys23). Positions 84-87 (HTGS) are connecting peptide. 2 consecutive Beta/gamma crystallin 'Greek key' domains span residues 88-128 (HRMR…HVLE) and 129-171 (GCWV…RRVV).

It belongs to the beta/gamma-crystallin family.

In terms of biological role, crystallins are the dominant structural components of the vertebrate eye lens. The protein is Gamma-crystallin C (Crygc) of Rattus norvegicus (Rat).